The chain runs to 314 residues: (+)-neomenthol dehydrogenase (314 aa).

NADP(+) is bound at residue 13-36; that stretch reads VTGGNKGIGYETCRQLASKGVVVV. Residue S183 participates in substrate binding. The active-site Proton acceptor is the Y239.

The protein belongs to the short-chain dehydrogenases/reductases (SDR) family. Monomer. As to expression, expressed in flowers and red fruit tissues. Not detected in leaves, stems, roots or green fruits.

The enzyme catalyses (+)-neomenthol + NADP(+) = (1R,4S)-menthone + NADPH + H(+). Involved in basal resistance against pathogens. The protein is (+)-neomenthol dehydrogenase (MNR1) of Capsicum annuum (Capsicum pepper).